Consider the following 247-residue polypeptide: GTP cyclohydrolase 1 type 2 homolog (247 aa).

A divalent metal cation-binding residues include histidine 63, histidine 64, aspartate 101, histidine 215, and glutamate 219.

This sequence belongs to the GTP cyclohydrolase I type 2/NIF3 family. As to quaternary structure, homohexamer.

The sequence is that of GTP cyclohydrolase 1 type 2 homolog from Yersinia pestis.